Reading from the N-terminus, the 439-residue chain is Mitochondrial distribution and morphology protein 12 (439 aa).

Residues 1–439 (MSIDVNWRFA…VYPSFWTFLI (439 aa)) form the SMP-LTD domain. Disordered stretches follow at residues 70–103 (YEEDDDDHTSDASEERGEEHSSRWNSTHPELNEP), 185–274 (GWSD…PPRM), and 354–386 (PEQQQQRESAGDDHRPQSRPDSSASASQKRHGG). Residues 78–91 (TSDASEERGEEHSS) show a composition bias toward basic and acidic residues. A compositionally biased stretch (polar residues) spans 215 to 245 (DTSNSTSRPSTANTLPSHPSGSSKNSGQAAT). Composition is skewed to basic and acidic residues over residues 247-261 (RNDHPSLHAGEHLED) and 362-371 (SAGDDHRPQS).

Belongs to the MDM12 family. In terms of assembly, component of the ER-mitochondria encounter structure (ERMES) or MDM complex, composed of mmm1, mdm10, mdm12 and mdm34. A mmm1 homodimer associates with one molecule of mdm12 on each side in a pairwise head-to-tail manner, and the SMP-LTD domains of mmm1 and mdm12 generate a continuous hydrophobic tunnel for phospholipid trafficking.

The protein localises to the mitochondrion outer membrane. It is found in the endoplasmic reticulum membrane. Component of the ERMES/MDM complex, which serves as a molecular tether to connect the endoplasmic reticulum (ER) and mitochondria. Components of this complex are involved in the control of mitochondrial shape and protein biogenesis, and function in nonvesicular lipid trafficking between the ER and mitochondria. Mdm12 is required for the interaction of the ER-resident membrane protein mmm1 and the outer mitochondrial membrane-resident beta-barrel protein mdm10. The mdm12-mmm1 subcomplex functions in the major beta-barrel assembly pathway that is responsible for biogenesis of all mitochondrial outer membrane beta-barrel proteins, and acts in a late step after the SAM complex. The mdm10-mdm12-mmm1 subcomplex further acts in the TOM40-specific pathway after the action of the mdm12-mmm1 complex. Essential for establishing and maintaining the structure of mitochondria and maintenance of mtDNA nucleoids. The sequence is that of Mitochondrial distribution and morphology protein 12 from Aspergillus fumigatus (strain CBS 144.89 / FGSC A1163 / CEA10) (Neosartorya fumigata).